Here is a 542-residue protein sequence, read N- to C-terminus: Probable folate-biopterin transporter 8, chloroplastic (542 aa).

The transit peptide at 1–78 (MERIMINPLL…GVSEFEETAR (78 aa)) directs the protein to the chloroplast. The interval 24–45 (LSSIHRQQQQQERQSNNNTLFM) is disordered. 12 consecutive transmembrane segments (helical) span residues 103 to 123 (FPWL…PSTL), 132 to 152 (LPMV…IGSG), 155 to 175 (VPYI…MGIF), 181 to 201 (VLPS…ITEV), 223 to 243 (ALMA…YLLL), 246 to 266 (PPKI…VVSL), 308 to 328 (LIWA…VFCY), 338 to 358 (SVIG…TVVY), 369 to 389 (PLIH…YILV), 404 to 424 (VLCF…PFAV), 446 to 466 (LCLS…LIGI), and 477 to 497 (GILI…LVPM). Positions 506–542 (GKRGISKRSRRNRRVGRVVDKESVTYRRERESEEAQR) are disordered. Over residues 509 to 521 (GISKRSRRNRRVG) the composition is skewed to basic residues. Residues 522–542 (RVVDKESVTYRRERESEEAQR) are compositionally biased toward basic and acidic residues.

This sequence belongs to the major facilitator superfamily. Folate-biopterin transporter (TC 2.A.71) family.

The protein resides in the plastid. It is found in the chloroplast membrane. Could mediate folate transport. In Arabidopsis thaliana (Mouse-ear cress), this protein is Probable folate-biopterin transporter 8, chloroplastic.